Reading from the N-terminus, the 329-residue chain is Mitochondrial glycine transporter (329 aa).

Solcar repeat units follow at residues 19 to 103, 130 to 214, and 232 to 316; these read SKTT…LRQP, LSNW…LKRH, and SSSS…LILR. 6 consecutive transmembrane segments (helical) span residues 25-50, 78-104, 136-161, 189-212, 236-262, and 291-309; these read FAAG…TRVQ, GTLP…RQPL, LGTG…VRYE, GFGA…EQLK, INFI…KTRL, and GLGL…AWTV.

It belongs to the mitochondrial carrier (TC 2.A.29) family. SLC25A38 subfamily.

It is found in the mitochondrion inner membrane. It carries out the reaction glycine(in) = glycine(out). In terms of biological role, mitochondrial glycine transporter that imports glycine into the mitochondrial matrix. Plays an important role in providing glycine for the first enzymatic step in heme biosynthesis, the condensation of glycine with succinyl-CoA to produce 5-aminolevulinate (ALA) in the mitochondrial matrix. The protein is Mitochondrial glycine transporter of Aspergillus terreus (strain NIH 2624 / FGSC A1156).